The following is a 1923-amino-acid chain: Nuclear pore complex protein GP210 (1923 aa).

An N-terminal signal peptide occupies residues 1 to 22 (MVPVSFCFFFLLLLLSAGESSS). Asparagine 73, asparagine 117, asparagine 289, asparagine 609, asparagine 863, asparagine 903, asparagine 967, asparagine 982, asparagine 1171, asparagine 1199, asparagine 1550, asparagine 1568, and asparagine 1743 each carry an N-linked (GlcNAc...) asparagine glycan. The BIG2 domain occupies 1152–1205 (IFLVPGASYVLTIEGGPTMNVSVDYTTVDNEVAKIEKSGRLYATSPGNTTIYAT). A helical membrane pass occupies residues 1829–1849 (SVLLKILWGVLVLVVSVIILM).

The protein belongs to the NUP210 family. Part of the nuclear pore complex (NPC). The NPC has an eight-fold symmetrical structure comprising a central transport channel and two rings, the cytoplasmic and nuclear rings, to which eight filaments are attached. The cytoplasmic filaments have loose ends, while the nuclear filaments are joined in a distal ring, forming a nuclear basket. NPCs are highly dynamic in configuration and composition, and can be devided in 3 subcomplexes, the NUP62 subcomplex, the NUP107-160 subcomplex and the NUP93 subcomplex, containing approximately 30 different nucleoporin proteins.

The protein resides in the nucleus envelope. The protein localises to the nucleus membrane. It is found in the nucleus. Its subcellular location is the nuclear pore complex. This chain is Nuclear pore complex protein GP210, found in Arabidopsis thaliana (Mouse-ear cress).